Here is a 149-residue protein sequence, read N- to C-terminus: 3-dehydroquinate dehydratase (149 aa).

Tyr-26 acts as the Proton acceptor in catalysis. Substrate-binding residues include Asn-77, His-83, and Asp-90. Residue His-103 is the Proton donor of the active site. Substrate-binding positions include 104 to 105 and Arg-114; that span reads LS.

It belongs to the type-II 3-dehydroquinase family. Homododecamer.

The enzyme catalyses 3-dehydroquinate = 3-dehydroshikimate + H2O. The protein operates within metabolic intermediate biosynthesis; chorismate biosynthesis; chorismate from D-erythrose 4-phosphate and phosphoenolpyruvate: step 3/7. Catalyzes a trans-dehydration via an enolate intermediate. The sequence is that of 3-dehydroquinate dehydratase from Aeromonas hydrophila subsp. hydrophila (strain ATCC 7966 / DSM 30187 / BCRC 13018 / CCUG 14551 / JCM 1027 / KCTC 2358 / NCIMB 9240 / NCTC 8049).